The chain runs to 348 residues: D-alanine--D-alanine ligase (348 aa).

The ATP-grasp domain maps to 132 to 334; sequence KRILEVAGVP…YSDLIKELVV (203 aa). 162 to 217 is an ATP binding site; that stretch reads LEKLTFPVFVKPANMGSSVGISKAENESELRSAIDLALKYDSRILIEQGVVAREIE. Mg(2+)-binding residues include aspartate 288, glutamate 301, and asparagine 303.

It belongs to the D-alanine--D-alanine ligase family. Mg(2+) serves as cofactor. Mn(2+) is required as a cofactor.

It localises to the cytoplasm. It carries out the reaction 2 D-alanine + ATP = D-alanyl-D-alanine + ADP + phosphate + H(+). It participates in cell wall biogenesis; peptidoglycan biosynthesis. Functionally, cell wall formation. This chain is D-alanine--D-alanine ligase, found in Streptococcus thermophilus (strain ATCC BAA-491 / LMD-9).